A 215-amino-acid polypeptide reads, in one-letter code: GTP-binding nuclear protein Ran (215 aa).

Residues 6-170 (DIPTFKLVLV…LWLVRKLLGD (165 aa)) form the Small GTPase Ran-type domain. GTP is bound by residues 17–24 (DGGTGKTT), 35–41 (EKKYVAT), glycine 67, 121–124 (NFVD), and 149–151 (SAK). Positions 36–44 (KKYVATLGV) are switch-I. A switch-II region spans residues 67–83 (GQEKFGGLRDGYYIQGQ). Residues 210-215 (DDDEDL) form an interaction with RANBP1 region.

It belongs to the small GTPase superfamily. Ran family. Monomer. Interacts with RANGAP1, which promotes RAN-mediated GTP hydrolysis. Interacts with KPNB1. Interaction with KPNB1 inhibits RANGAP1-mediated stimulation of GTPase activity. Interacts with RCC1 which promotes the exchange of RAN-bound GDP by GTP. Interaction with KPNB1 inhibits RCC1-mediated exchange of RAN-bound GDP by GTP. Interacts (GTP-bound form) with TNPO1; the interaction is direct. Interacts with KPNB1 and with TNPO1; both inhibit RAN GTPase activity. Interacts (via C-terminus) with RANBP1, which alleviates the inhibition of RAN GTPase activity. Interacts with RANGRF, which promotes the release of bound guanine nucleotide. RANGRF and RCC1 compete for an overlapping binding site on RAN. Identified in a complex with KPNA2 and CSE1L; interaction with RANBP1 mediates dissociation of RAN from this complex. Interaction with both RANBP1 and KPNA2 promotes dissociation of the complex between RAN and KPNB1. Identified in a complex composed of RAN, RANGAP1 and RANBP1. Identified in a complex that contains TNPO1, RAN and RANBP1. Identified in a nuclear export complex with XPO1. Interaction with RANBP1 or RANBP2 induces a conformation change in the complex formed by XPO1 and RAN that triggers the release of the nuclear export signal of cargo proteins. Component of a nuclear export receptor complex composed of KPNB1, RAN, SNUPN and XPO1. Mg(2+) is required as a cofactor.

It localises to the nucleus. The protein localises to the nucleus envelope. The protein resides in the cytoplasm. It is found in the cytosol. Its function is as follows. GTPase involved in nucleocytoplasmic transport, participating both to the import and the export from the nucleus of proteins and RNAs. Switches between a cytoplasmic GDP- and a nuclear GTP-bound state by nucleotide exchange and GTP hydrolysis. Nuclear import receptors such as importin beta bind their substrates only in the absence of GTP-bound RAN and release them upon direct interaction with GTP-bound RAN, while export receptors behave in the opposite way. Thereby, RAN controls cargo loading and release by transport receptors in the proper compartment and ensures the directionality of the transport. Interaction with RANBP1 induces a conformation change in the complex formed by XPO1 and RAN that triggers the release of the nuclear export signal of cargo proteins. RAN (GTP-bound form) triggers microtubule assembly at mitotic chromosomes and is required for normal mitotic spindle assembly and chromosome segregation. Required for normal progress through mitosis. The chain is GTP-binding nuclear protein Ran (ran-1) from Onchocerca volvulus.